The primary structure comprises 1028 residues: Antigenic heat-stable 120 kDa protein (1028 aa).

2 stretches are compositionally biased toward polar residues: residues 359-384 (GQSK…QYKQ) and 391-400 (PTNQPLQPET). The tract at residues 359 to 405 (GQSKEQPLITPQQTTSSSVEPPQYKQQVPPITPTNQPLQPETSQMQQ) is disordered.

The protein localises to the cytoplasm. In Rickettsia africae, this protein is Antigenic heat-stable 120 kDa protein (sca4).